The chain runs to 292 residues: 4-hydroxy-tetrahydrodipicolinate synthase (292 aa).

Residue Thr-45 participates in pyruvate binding. The Proton donor/acceptor role is filled by Tyr-133. Lys-161 serves as the catalytic Schiff-base intermediate with substrate. Ile-203 serves as a coordination point for pyruvate.

It belongs to the DapA family. As to quaternary structure, homotetramer; dimer of dimers.

The protein localises to the cytoplasm. It catalyses the reaction L-aspartate 4-semialdehyde + pyruvate = (2S,4S)-4-hydroxy-2,3,4,5-tetrahydrodipicolinate + H2O + H(+). It participates in amino-acid biosynthesis; L-lysine biosynthesis via DAP pathway; (S)-tetrahydrodipicolinate from L-aspartate: step 3/4. Its function is as follows. Catalyzes the condensation of (S)-aspartate-beta-semialdehyde [(S)-ASA] and pyruvate to 4-hydroxy-tetrahydrodipicolinate (HTPA). The chain is 4-hydroxy-tetrahydrodipicolinate synthase from Erwinia tasmaniensis (strain DSM 17950 / CFBP 7177 / CIP 109463 / NCPPB 4357 / Et1/99).